The primary structure comprises 177 residues: Large ribosomal subunit protein uL10 (177 aa).

It belongs to the universal ribosomal protein uL10 family. Part of the ribosomal stalk of the 50S ribosomal subunit. The N-terminus interacts with L11 and the large rRNA to form the base of the stalk. The C-terminus forms an elongated spine to which L12 dimers bind in a sequential fashion forming a multimeric L10(L12)X complex.

Its function is as follows. Forms part of the ribosomal stalk, playing a central role in the interaction of the ribosome with GTP-bound translation factors. This is Large ribosomal subunit protein uL10 from Xanthomonas oryzae pv. oryzae (strain MAFF 311018).